The sequence spans 335 residues: Epidermal differentiation-specific protein (335 aa).

Beta/gamma crystallin 'Greek key' domains are found at residues 2–42 (NTIT…KIVG), 43–81 (QPWILHQDINYSGQCLPLEEGEYSGISMNDGASSLRLIT), 87–126 (PQITVYEHVNGGGKALVLTEETNLAFGNMHDNISSHRVQR), and 127–169 (GAWA…YPLR).

It belongs to the beta/gamma-crystallin family. As to expression, epidermis specific.

The polypeptide is Epidermal differentiation-specific protein (Cynops pyrrhogaster (Japanese fire-bellied newt)).